The following is a 676-amino-acid chain: Pescadillo homolog (676 aa).

Positions 277 to 296 (TIEGSNKQSNNSSNQEVSRD) are disordered. Residues 281 to 291 (SNKQSNNSSNQ) show a composition bias toward low complexity. Residues 351 to 467 (EAGALFAPFT…KLLRPDLYAP (117 aa)) enclose the BRCT domain. Residues 471–676 (LPPHLSPWVK…RRKLEKTGEK (206 aa)) are disordered. Residues 494–519 (EQEEEGEAEMAGEEEEEESDEEMEEA) are compositionally biased toward acidic residues. Over residues 520-531 (PETKKADAKADE) the composition is skewed to basic and acidic residues. Acidic residues-rich tracts occupy residues 532 to 541 (SESEDEDESV) and 548 to 581 (ADSD…DEEE). The stretch at 571–676 (EAASESEDEE…RRKLEKTGEK (106 aa)) forms a coiled coil. The span at 582 to 592 (AARTQHQKELE) shows a compositional bias: basic and acidic residues. Over residues 611-624 (KKKSSQAKKIAAKK) the composition is skewed to basic residues. The segment covering 625–635 (RKEEEELERQK) has biased composition (basic and acidic residues).

This sequence belongs to the pescadillo family. Component of the NOP7 complex, composed of erb1, nop7 and ytm1. The complex is held together by erb1, which interacts with nop7 via its N-terminal domain and with ytm1 via a high-affinity interaction between the seven-bladed beta-propeller domains of the 2 proteins. The NOP7 complex associates with the 66S pre-ribosome.

It is found in the nucleus. It localises to the nucleolus. Its subcellular location is the nucleoplasm. Its function is as follows. Component of the NOP7 complex, which is required for maturation of the 25S and 5.8S ribosomal RNAs and formation of the 60S ribosome. The chain is Pescadillo homolog (nop7) from Aspergillus terreus (strain NIH 2624 / FGSC A1156).